A 107-amino-acid polypeptide reads, in one-letter code: Class I hydrophobin hgfI (107 aa).

Residues 1 to 24 (MFSKLAIFATAAFAVLAAATPVRR) form the signal peptide. Intrachain disulfides connect C27–C88, C34–C82, C35–C68, and C89–C102.

It belongs to the fungal hydrophobin family. As to quaternary structure, self-assembles to form functional amyloid fibrils called rodlets with a length range 100-150 nm. Self-assembly into fibrillar rodlets occurs spontaneously at hydrophobic:hydrophilic interfaces and the rodlets further associate laterally to form amphipathic monolayers. As to expression, only weekly expressed in hyphae cultured in liquid medium.

The protein localises to the secreted. It is found in the cell wall. Its function is as follows. Aerial growth, conidiation, and dispersal of filamentous fungi in the environment rely upon a capability of their secreting small amphipathic proteins called hydrophobins (HPBs) with low sequence identity. Class I can self-assemble into an outermost layer of rodlet bundles on aerial cell surfaces, conferring cellular hydrophobicity that supports fungal growth, development and dispersal; whereas Class II form highly ordered films at water-air interfaces through intermolecular interactions but contribute nothing to the rodlet structure. HgfI is a class I hydrophobin that is involved in cell surface hydrophobicity and lowers the surface tension of water and change the nature of the surfaces to which it adsorbs. The protein is Class I hydrophobin hgfI of Grifola frondosa (Maitake).